The chain runs to 386 residues: Inactive GDSL esterase/lipase-like protein 23 (386 aa).

An N-terminal signal peptide occupies residues 1–29 (MMAKNCNLVSVLCVFLVLTLFNKPITVAG). The active-site Nucleophile is the S43. N-linked (GlcNAc...) asparagine glycans are attached at residues N105, N165, and N288. Catalysis depends on residues D322 and H325.

This sequence belongs to the 'GDSL' lipolytic enzyme family. Part of the PYK10 complex. Interacts with MVP1. In terms of tissue distribution, expressed mainly in roots.

The protein resides in the endoplasmic reticulum. Involved in the control of the PYK10 complex size and possibly substrate specificity. May be exported from the endoplasmic reticulum upon interaction with MVP1. The protein is Inactive GDSL esterase/lipase-like protein 23 (GLL23) of Arabidopsis thaliana (Mouse-ear cress).